The chain runs to 476 residues: Bifunctional protein HldE (476 aa).

The ribokinase stretch occupies residues 1 to 318; that stretch reads MKVTLPDFRR…ENAIRGRAET (318 aa). Residue 195 to 198 participates in ATP binding; sequence NLSE. Residue aspartate 264 is part of the active site. A cytidylyltransferase region spans residues 344-476; it reads MTNGIFDILH…IIQSIKNGRG (133 aa).

It in the N-terminal section; belongs to the carbohydrate kinase PfkB family. This sequence in the C-terminal section; belongs to the cytidylyltransferase family. As to quaternary structure, homodimer.

The enzyme catalyses D-glycero-beta-D-manno-heptose 7-phosphate + ATP = D-glycero-beta-D-manno-heptose 1,7-bisphosphate + ADP + H(+). The catalysed reaction is D-glycero-beta-D-manno-heptose 1-phosphate + ATP + H(+) = ADP-D-glycero-beta-D-manno-heptose + diphosphate. Its pathway is nucleotide-sugar biosynthesis; ADP-L-glycero-beta-D-manno-heptose biosynthesis; ADP-L-glycero-beta-D-manno-heptose from D-glycero-beta-D-manno-heptose 7-phosphate: step 1/4. The protein operates within nucleotide-sugar biosynthesis; ADP-L-glycero-beta-D-manno-heptose biosynthesis; ADP-L-glycero-beta-D-manno-heptose from D-glycero-beta-D-manno-heptose 7-phosphate: step 3/4. Functionally, catalyzes the phosphorylation of D-glycero-D-manno-heptose 7-phosphate at the C-1 position to selectively form D-glycero-beta-D-manno-heptose-1,7-bisphosphate. Its function is as follows. Catalyzes the ADP transfer from ATP to D-glycero-beta-D-manno-heptose 1-phosphate, yielding ADP-D-glycero-beta-D-manno-heptose. The polypeptide is Bifunctional protein HldE (Yersinia pseudotuberculosis serotype O:1b (strain IP 31758)).